A 1493-amino-acid chain; its full sequence is DNA excision repair protein ERCC-6 (1493 aa).

Residues 1–39 (MPNEGIPHSSQTQEQDCLQSQPVSNNEEMAIKQESGGDG) are disordered. Residues 1–510 (MPNEGIPHSS…GFLFKKLFKY (510 aa)) form an N-terminal domain; essential for its chromatin remodeling activity region. Over residues 8-27 (HSSQTQEQDCLQSQPVSNNE) the composition is skewed to polar residues. Ser10 bears the Phosphoserine; by ATM mark. Residue Ser158 is modified to Phosphoserine; by CDK2. Lys170 carries the post-translational modification N6-methylated lysine; by EHMT2. Lys205 is covalently cross-linked (Glycyl lysine isopeptide (Lys-Gly) (interchain with G-Cter in SUMO3)). Residue Lys255 forms a Glycyl lysine isopeptide (Lys-Gly) (interchain with G-Cter in SUMO2) linkage. Disordered stretches follow at residues 287-323 (KQGC…VLSK) and 344-453 (GKVG…GRYR). N6-methylated lysine; by EHMT2 is present on Lys297. Over residues 353 to 363 (RPWESDMRPEA) the composition is skewed to basic and acidic residues. Acidic residues predominate over residues 364 to 392 (EGDSEGEESEYFPTEEEEEEEDDEVEGAE). A phosphoserine mark is found at Ser429 and Ser430. Residue Lys448 is modified to N6-methylated lysine; by EHMT2. Phosphoserine occurs at positions 486 and 489. The 177-residue stretch at 519-695 (WELHCQQAGG…WSLFDFIFPG (177 aa)) folds into the Helicase ATP-binding domain. 532 to 539 (DEMGLGKT) serves as a coordination point for ATP. Positions 646–649 (DEGH) match the DEAH box motif. Positions 843 to 1002 (VVESLLKIWH…RRFFKSNDLY (160 aa)) constitute a Helicase C-terminal domain. Disordered regions lie at residues 1042–1147 (PAFG…DESI), 1181–1247 (HKSK…EQSN), and 1318–1384 (RGIS…SGPL). N6-methylated lysine; by EHMT2 is present on Lys1054. Over residues 1123 to 1141 (ISGNGECSNSSGTGKTSMP) the composition is skewed to polar residues. Ser1142 bears the Phosphoserine mark. Residues 1200–1210 (LRPKQKPKNSK) show a composition bias toward basic residues. 2 stretches are compositionally biased toward basic and acidic residues: residues 1211-1221 (HCRDAKFEGTR) and 1232-1247 (QKQD…EQSN). Residues 1327 to 1336 (KKSRFGKKRN) are compositionally biased toward basic residues. Over residues 1337 to 1351 (SNFSVQHPSSTSPTE) the composition is skewed to polar residues. The residue at position 1348 (Ser1348) is a Phosphoserine. A compositionally biased stretch (basic and acidic residues) spans 1352–1376 (KCQDGIMKKEGKDNVPEHFSGRAED). The CSA-interacting motif (CIM) signature appears at 1386 to 1398 (SSSLLAKMRARNH). Positions 1400-1428 (ILPERLESESGHLQEASALLPTTEHDDLL) are ubiquitin-binding domain (UBD). The interval 1429 to 1493 (VEMRNFIAFQ…GIWKLKPEYC (65 aa)) is winged-helix domain (WHD). The segment at 1446 to 1493 (STREILQEFESKLSASQSCVFRELLRNLCTFHRTSGGEGIWKLKPEYC) is essential for its interaction with RNA polymerase II, transcription-coupled nucleotide excision repair activity, association with chromatin after UV irradiation and for mediating the UV-induced translocation of ERRC8 to the nuclear matrix.

This sequence belongs to the SNF2/RAD54 helicase family. Homodimer. Binds DNA. Interacts with ERCC8. Interacts with RNA polymerase II; interaction is enhanced by UV irradiation. Component of the B-WICH complex, at least composed of SMARCA5/SNF2H, BAZ1B/WSTF, SF3B1, DEK, MYO1C, ERCC6, MYBBP1A and DDX21. Interacts with KIAA1530/UVSSA. Interacts with ELOA and CUL5; the interaction is induced by DNA damaging agents or by inhibitors of RNA polymerase II elongation. Interacts (via WHD region) with RIF1. Interacts with SMARCC2/BAF170, SMARCB1/BAF47 and the neuron-specific chromatin remodeling complex (nBAF complex). Interacts with ERCC5/XPG (via C-terminus); the interaction stimulates ERCC6/CSB binding to the DNA repair bubble and ERCC6/CSB ATPase activity. May form a complex composed of RNA polymerase II, ERCC6/CSB and ERCC5/XPG which associates with the DNA repair bubble during transcription-coupled nucleotide excision repair. Interacts with CAND1, CSTF1, DDX3X, DDX5, DDX17, DDX23, DHX36, HDAC1, HNRNPU, MTA2, PRPF3, PSMD3, RBBP4, SFPQ, SMARCA1, SMARCA2, TOP1, USP7, XRCC5, COPS3, COPS4, COPS6, DDX1, DDX41, GATAD2A, GATAD2B, PRPF4, PSMC5, SF3B2, CTR9, NONO, PSMD12 and TOP2A. Post-translationally, phosphorylated in a cell cycle-dependent manner at Ser-158 by cyclin A-CDK2 and at Ser-10 by ATM in response to DNA damage. Phosphorylation at these two sites promotes the intramolecular interaction of the N-terminal domain with the helicase ATP-binding domain, thereby probably releasing the inhibitory effect of the N-terminal domain on its ATPase activity. Phosphorylation is essential for its chromatin remodeling activity. In terms of processing, ubiquitinated at the C-terminus. Ubiquitination by the CSA complex leads to ERCC6 proteasomal degradation in a UV-dependent manner. Stabilized following interaction with KIAA1530/UVSSA, which promotes recruitment of deubiquitinating enzyme USP7, leading to deubiquitination of ERCC6 thereby preventing UV-induced degradation of ERCC6 by the proteasome. Sumoylation at Lys-205 in an UV-radiation-dependent manner is essential for its transcription-coupled nucleotide excision repair activity.

The protein resides in the nucleus. It localises to the chromosome. It carries out the reaction ATP + H2O = ADP + phosphate + H(+). Its function is as follows. Essential factor involved in transcription-coupled nucleotide excision repair (TC-NER), a process during which RNA polymerase II-blocking lesions are rapidly removed from the transcribed strand of active genes. Plays a central role in the initiation of the TC-NER process: specifically recognizes and binds RNA polymerase II stalled at a lesion, and mediates recruitment of ERCC8/CSA, initiating DNA damage excision by TFIIH recruitment. Upon DNA-binding, it locally modifies DNA conformation by wrapping the DNA around itself, thereby modifying the interface between stalled RNA polymerase II and DNA. Acts as a chromatin remodeler at DSBs; DNA-dependent ATPase-dependent activity is essential for this function. Plays an important role in regulating the choice of the DNA double-strand breaks (DSBs) repair pathway and G2/M checkpoint activation; DNA-dependent ATPase activity is essential for this function. Regulates the DNA repair pathway choice by inhibiting non-homologous end joining (NHEJ), thereby promoting the homologous recombination (HR)-mediated repair of DSBs during the S/G2 phases of the cell cycle. Mediates the activation of the ATM- and CHEK2-dependent DNA damage responses thus preventing premature entry of cells into mitosis following the induction of DNA DSBs. Remodels chromatin by evicting histones from chromatin flanking DSBs, limiting RIF1 accumulation at DSBs thereby promoting BRCA1-mediated HR. Required for stable recruitment of ELOA and CUL5 to DNA damage sites. Also involved in UV-induced translocation of ERCC8 to the nuclear matrix. Essential for neuronal differentiation and neuritogenesis; regulates transcription and chromatin remodeling activities required during neurogenesis. This Homo sapiens (Human) protein is DNA excision repair protein ERCC-6.